Here is a 371-residue protein sequence, read N- to C-terminus: Cuticle collagen 71 (371 aa).

A helical transmembrane segment spans residues 38–60; the sequence is GYAAVTFSTVSVICFCVTMPVVF. Disordered stretches follow at residues 108 to 127 and 153 to 371; these read AGYDVHPSKPTPVGYSGGDA and EGPH…GTRR. A compositionally biased stretch (pro residues) spans 174 to 186; that stretch reads PGPPGPPGPPGRP. Positions 188-201 are enriched in low complexity; that stretch reads PNGKAGANGLNGNP. Residues 202 to 222 show a composition bias toward pro residues; it reads GRPPEAPCEPVTPPPCPPCPA. Positions 223–240 are enriched in low complexity; sequence GPKGAPGQAGYPGADGQP. The 58-residue stretch at 223-280 folds into the Collagen-like domain; it reads GPKGAPGQAGYPGADGQPGSQGDNGEKGSDGAAGEKGRPGPLGKIGEPGATGETGENA. Residues 246–260 show a composition bias toward basic and acidic residues; the sequence is NGEKGSDGAAGEKGR. The span at 314–323 shows a compositional bias: low complexity; sequence AGAPGAPGEN. Residues 340-349 show a composition bias toward basic and acidic residues; sequence HDGKAGRAGE.

Belongs to the cuticular collagen family. In terms of assembly, collagen polypeptide chains are complexed within the cuticle by disulfide bonds and other types of covalent cross-links.

The protein localises to the membrane. Its subcellular location is the nucleus. Probable cuticular collagen-like protein. Nematode cuticles are composed largely of collagen-like proteins. The cuticle functions both as an exoskeleton and as a barrier to protect the worm from its environment. Acts downstream of the Wnt signaling pathway, perhaps in the formation of the adult cuticle. In Caenorhabditis elegans, this protein is Cuticle collagen 71.